A 185-amino-acid chain; its full sequence is Elongation factor P (185 aa).

The protein belongs to the elongation factor P family.

The protein resides in the cytoplasm. Its pathway is protein biosynthesis; polypeptide chain elongation. Involved in peptide bond synthesis. Stimulates efficient translation and peptide-bond synthesis on native or reconstituted 70S ribosomes in vitro. Probably functions indirectly by altering the affinity of the ribosome for aminoacyl-tRNA, thus increasing their reactivity as acceptors for peptidyl transferase. This Clostridium tetani (strain Massachusetts / E88) protein is Elongation factor P.